Reading from the N-terminus, the 338-residue chain is Histidinol-phosphate aminotransferase (338 aa).

Position 204 is an N6-(pyridoxal phosphate)lysine (Lys204).

Belongs to the class-II pyridoxal-phosphate-dependent aminotransferase family. Histidinol-phosphate aminotransferase subfamily. Pyridoxal 5'-phosphate serves as cofactor.

It carries out the reaction L-histidinol phosphate + 2-oxoglutarate = 3-(imidazol-4-yl)-2-oxopropyl phosphate + L-glutamate. Its pathway is amino-acid biosynthesis; L-histidine biosynthesis; L-histidine from 5-phospho-alpha-D-ribose 1-diphosphate: step 7/9. The sequence is that of Histidinol-phosphate aminotransferase from Pyrococcus furiosus (strain ATCC 43587 / DSM 3638 / JCM 8422 / Vc1).